Here is a 157-residue protein sequence, read N- to C-terminus: Transcriptional repressor NrdR (157 aa).

Residues 3–34 (CPFCSATDTKVIDSRLVADGHQVRRRRECLLC) fold into a zinc finger. The ATP-cone domain occupies 49-139 (PRVVKQDGSR…VYRAFEDVSE (91 aa)).

This sequence belongs to the NrdR family. Zn(2+) is required as a cofactor.

Its function is as follows. Negatively regulates transcription of bacterial ribonucleotide reductase nrd genes and operons by binding to NrdR-boxes. The chain is Transcriptional repressor NrdR from Shewanella loihica (strain ATCC BAA-1088 / PV-4).